The chain runs to 108 residues: Trp operon repressor homolog (108 aa).

Residues 59–82 mediate DNA binding; the sequence is QRQISQLLGVGVATITRGSNELKS.

The protein belongs to the TrpR family. As to quaternary structure, homodimer.

The protein localises to the cytoplasm. Its function is as follows. This protein is an aporepressor. When complexed with L-tryptophan it binds the operator region of the trp operon and prevents the initiation of transcription. In Aliivibrio fischeri (strain MJ11) (Vibrio fischeri), this protein is Trp operon repressor homolog.